Reading from the N-terminus, the 79-residue chain is MDTKQGVLDILNDLTGEDLSDQMDENIFDNGLMDSMASVQMLLSLQEKFDIDVPVSEFNREEWDTPNKIVAKVESLENE.

Positions 1-77 (MDTKQGVLDI…KIVAKVESLE (77 aa)) constitute a Carrier domain. Position 35 is an O-(pantetheine 4'-phosphoryl)serine (Ser35).

This sequence belongs to the DltC family. Post-translationally, 4'-phosphopantetheine is transferred from CoA to a specific serine of apo-DCP.

The protein localises to the cytoplasm. It functions in the pathway cell wall biogenesis; lipoteichoic acid biosynthesis. Its function is as follows. Carrier protein involved in the D-alanylation of lipoteichoic acid (LTA). The loading of thioester-linked D-alanine onto DltC is catalyzed by D-alanine--D-alanyl carrier protein ligase DltA. The DltC-carried D-alanyl group is further transferred to cell membrane phosphatidylglycerol (PG) by forming an ester bond, probably catalyzed by DltD. D-alanylation of LTA plays an important role in modulating the properties of the cell wall in Gram-positive bacteria, influencing the net charge of the cell wall. This chain is D-alanyl carrier protein, found in Lactobacillus acidophilus (strain ATCC 700396 / NCK56 / N2 / NCFM).